The following is a 357-amino-acid chain: UDP-N-acetylglucosamine--N-acetylmuramyl-(pentapeptide) pyrophosphoryl-undecaprenol N-acetylglucosamine transferase (357 aa).

UDP-N-acetyl-alpha-D-glucosamine contacts are provided by residues 15 to 17 (SGG), Asn125, Ser190, and Gln290.

The protein belongs to the glycosyltransferase 28 family. MurG subfamily.

It is found in the cell inner membrane. It carries out the reaction di-trans,octa-cis-undecaprenyl diphospho-N-acetyl-alpha-D-muramoyl-L-alanyl-D-glutamyl-meso-2,6-diaminopimeloyl-D-alanyl-D-alanine + UDP-N-acetyl-alpha-D-glucosamine = di-trans,octa-cis-undecaprenyl diphospho-[N-acetyl-alpha-D-glucosaminyl-(1-&gt;4)]-N-acetyl-alpha-D-muramoyl-L-alanyl-D-glutamyl-meso-2,6-diaminopimeloyl-D-alanyl-D-alanine + UDP + H(+). It participates in cell wall biogenesis; peptidoglycan biosynthesis. Functionally, cell wall formation. Catalyzes the transfer of a GlcNAc subunit on undecaprenyl-pyrophosphoryl-MurNAc-pentapeptide (lipid intermediate I) to form undecaprenyl-pyrophosphoryl-MurNAc-(pentapeptide)GlcNAc (lipid intermediate II). The sequence is that of UDP-N-acetylglucosamine--N-acetylmuramyl-(pentapeptide) pyrophosphoryl-undecaprenol N-acetylglucosamine transferase from Chlamydia pneumoniae (Chlamydophila pneumoniae).